We begin with the raw amino-acid sequence, 159 residues long: Small ribosomal subunit protein bS16 (159 aa).

The span at 102 to 119 (GIPEAAEEAPATESVAEA) shows a compositional bias: low complexity. Residues 102–159 (GIPEAAEEAPATESVAEAEVADVPESELSEAATETAAAELSPPEAEVEKPQVEEAVEA) are disordered. Residues 120 to 129 (EVADVPESEL) are compositionally biased toward acidic residues. Low complexity predominate over residues 130–145 (SEAATETAAAELSPPE).

This sequence belongs to the bacterial ribosomal protein bS16 family.

The protein is Small ribosomal subunit protein bS16 of Synechococcus sp. (strain JA-2-3B'a(2-13)) (Cyanobacteria bacterium Yellowstone B-Prime).